Reading from the N-terminus, the 338-residue chain is Ferrochelatase (338 aa).

The Fe cation site is built by His202 and Glu283.

The protein belongs to the ferrochelatase family.

Its subcellular location is the cytoplasm. It carries out the reaction heme b + 2 H(+) = protoporphyrin IX + Fe(2+). It participates in porphyrin-containing compound metabolism; protoheme biosynthesis; protoheme from protoporphyrin-IX: step 1/1. In terms of biological role, catalyzes the ferrous insertion into protoporphyrin IX. The polypeptide is Ferrochelatase (Acinetobacter baumannii (strain AB307-0294)).